Consider the following 325-residue polypeptide: Small ribosomal subunit protein uS4m (325 aa).

The region spanning 146-209 (KRIDMILLRS…HKQNLIHRLK (64 aa)) is the S4 RNA-binding domain.

The protein belongs to the universal ribosomal protein uS4 family.

It is found in the mitochondrion. This is Small ribosomal subunit protein uS4m (mrps4) from Dictyostelium citrinum (Slime mold).